The sequence spans 674 residues: UvrABC system protein B (674 aa).

The region spanning 26–183 (EGLEDGLAHQ…RRLAELQYTR (158 aa)) is the Helicase ATP-binding domain. 39–46 (GVTGSGKT) is an ATP binding site. The short motif at 92-115 (YYDYYQPEAYVPSSDTFIEKDASV) is the Beta-hairpin element. In terms of domain architecture, Helicase C-terminal spans 431-597 (QVDDLLSEIR…GLNKKISDIL (167 aa)). Positions 634–669 (QKRIHQLEAQMQQHAQNLEFEEAAQVRDQLHQVREL) constitute a UVR domain.

This sequence belongs to the UvrB family. Forms a heterotetramer with UvrA during the search for lesions. Interacts with UvrC in an incision complex.

The protein resides in the cytoplasm. In terms of biological role, the UvrABC repair system catalyzes the recognition and processing of DNA lesions. A damage recognition complex composed of 2 UvrA and 2 UvrB subunits scans DNA for abnormalities. Upon binding of the UvrA(2)B(2) complex to a putative damaged site, the DNA wraps around one UvrB monomer. DNA wrap is dependent on ATP binding by UvrB and probably causes local melting of the DNA helix, facilitating insertion of UvrB beta-hairpin between the DNA strands. Then UvrB probes one DNA strand for the presence of a lesion. If a lesion is found the UvrA subunits dissociate and the UvrB-DNA preincision complex is formed. This complex is subsequently bound by UvrC and the second UvrB is released. If no lesion is found, the DNA wraps around the other UvrB subunit that will check the other stand for damage. The protein is UvrABC system protein B of Erwinia tasmaniensis (strain DSM 17950 / CFBP 7177 / CIP 109463 / NCPPB 4357 / Et1/99).